The sequence spans 502 residues: Lysine--tRNA ligase (502 aa).

Mg(2+) contacts are provided by Glu-411 and Glu-418.

The protein belongs to the class-II aminoacyl-tRNA synthetase family. Homodimer. Mg(2+) serves as cofactor.

It is found in the cytoplasm. The catalysed reaction is tRNA(Lys) + L-lysine + ATP = L-lysyl-tRNA(Lys) + AMP + diphosphate. This is Lysine--tRNA ligase from Clostridium tetani (strain Massachusetts / E88).